The following is a 337-amino-acid chain: tRNA N6-adenosine threonylcarbamoyltransferase (337 aa).

Residues His-111 and His-115 each contribute to the Fe cation site. Substrate-binding positions include 134–138, Asp-167, Gly-180, and Asn-272; that span reads LVSGG. Residue Asp-300 coordinates Fe cation.

It belongs to the KAE1 / TsaD family. It depends on Fe(2+) as a cofactor.

It is found in the cytoplasm. It catalyses the reaction L-threonylcarbamoyladenylate + adenosine(37) in tRNA = N(6)-L-threonylcarbamoyladenosine(37) in tRNA + AMP + H(+). Required for the formation of a threonylcarbamoyl group on adenosine at position 37 (t(6)A37) in tRNAs that read codons beginning with adenine. Is involved in the transfer of the threonylcarbamoyl moiety of threonylcarbamoyl-AMP (TC-AMP) to the N6 group of A37, together with TsaE and TsaB. TsaD likely plays a direct catalytic role in this reaction. The polypeptide is tRNA N6-adenosine threonylcarbamoyltransferase (Escherichia coli O127:H6 (strain E2348/69 / EPEC)).